We begin with the raw amino-acid sequence, 115 residues long: MNAWLLSVLCLLGALAVLVEGVTVQDGDLSFPLESVKQLKHLREVQEPTLMSHKKFALRLPKPVAPELCSQSAFPEALRPLCEKPNAEEILQRLEAIAQDPNTCEICAYAACTGC.

The first 23 residues, 1–23 (MNAWLLSVLCLLGALAVLVEGVT), serve as a signal peptide directing secretion. A propeptide spanning residues 24–100 (VQDGDLSFPL…LQRLEAIAQD (77 aa)) is cleaved from the precursor. Cystine bridges form between Cys-69-Cys-82, Cys-104-Cys-112, and Cys-107-Cys-115.

This sequence belongs to the guanylin family. In terms of tissue distribution, intestine and in low abundance in adrenal gland, kidney, and uterus/oviduct.

The protein localises to the secreted. In terms of biological role, endogenous activator of intestinal guanylate cyclase. It stimulates this enzyme through the same receptor binding region as the heat-stable enterotoxins. This is Guanylin (Guca2a) from Rattus norvegicus (Rat).